Reading from the N-terminus, the 1076-residue chain is MPKREDIRKIMVIGSGPIVIGQAAEFDYSGSQACKALREEGYEVVLVNSNPATIMTDPEMADRVYIEPLDAEIVAKIIERETPDALLPTLGGQTALNLAVQLTEMGVLDKYGVELIGAKFEAIKKAEDRELFKEAMRKIGLDVPKSDVAHDVSEALAIADEIGYPVVVRPAFTLGGTGGGIAYNREELREIAERGIKMSMINQVLIEEGVLGWKEFELEVMRDLADNVVIICSIENFDPMGVHTGDSITVAPAQTLTDVEYQYLRDAAIKIIREIGVETGGSNIQFAVHPENGRVVAIEMNPRVSRSSALASKATGFPIAKIAAKLAVGYTLDEIPNDITKETPASFEPTIDYVVVKIPRFAFDKFPTANQVLGSQMKSVGEVMAVGRTFEEALQKAIRSLEIGRYGLGCDGKDKEVTMEEIRERLRYPNASRVFYIRYALQKGMSVNEIYELTKIDPWFIDKIKNLVEFEEQLKQIAERMSIEEVPKEILKKAKELGYSDRQLAVIFNTTEREVRRVRKGKGLRVVYKMVDTCAAEFEAKTPYYYSTYEDENEALRSERKKVMILGAGPNRIGQGIEFDYCCVHAVFSLKDEGYETIMVNCNPETVSTDYDTSDRLYFEPITHEDVMNIYENEQPEGVIVQFGGQTPLNIARELEDSGARILGTSVDSIDIAEDRERFAELLERLNIPQPENGIAHSLEEAKEIARKIGFPVLVRPSYVLGGRAMEIVYDEETLERYITEALEVSPEKPILIDKFLEDAIEVEVDALCDGEEVVIGGIMEHIEEAGVHSGDSACVLPPVSLDEVTINTIVDYTRKLALALNVVGLINIQYAVKDGKVYVLEANPRASRTVPFVSKATGIPLAKIAAKLMMGKKLRELGVKEKLKLKHVAVKEAVFPFIKLPGVDPVLGPEMKSTGEVMGIDYDFGLAYYKAELAAGMKLPLKGTVFISVRRKDKNDRLLYLARKFKELGFRIIATDGTRDFLVQNGIEADLILKISQGRPNILDAIVNGQVDLIINTPSGKRGRTEGYMIRRAAVDYGVAHITTLAGAMAAVRAIEAVKSRKMVVKSIQEYHEES.

Residues 1–402 form a carboxyphosphate synthetic domain region; that stretch reads MPKREDIRKI…ALQKAIRSLE (402 aa). ATP-binding residues include R129, R169, G175, G176, E208, V210, E215, G241, V242, H243, Q285, and E299. The ATP-grasp 1 domain occupies 133–328; that stretch reads KEAMRKIGLD…IAKIAAKLAV (196 aa). The Mg(2+) site is built by Q285, E299, and N301. Residues Q285, E299, and N301 each coordinate Mn(2+). The tract at residues 403-555 is oligomerization domain; that stretch reads IGRYGLGCDG…YSTYEDENEA (153 aa). Positions 556–939 are carbamoyl phosphate synthetic domain; it reads LRSERKKVMI…YKAELAAGMK (384 aa). Positions 680–871 constitute an ATP-grasp 2 domain; that stretch reads AELLERLNIP…LAKIAAKLMM (192 aa). ATP contacts are provided by R716, K755, L757, E762, G787, V788, H789, S790, Q830, and E842. Mg(2+)-binding residues include Q830, E842, and N844. 3 residues coordinate Mn(2+): Q830, E842, and N844. In terms of domain architecture, MGS-like spans 938–1076; sequence MKLPLKGTVF…KSIQEYHEES (139 aa). The tract at residues 940–1076 is allosteric domain; it reads LPLKGTVFIS…KSIQEYHEES (137 aa).

Belongs to the CarB family. Composed of two chains; the small (or glutamine) chain promotes the hydrolysis of glutamine to ammonia, which is used by the large (or ammonia) chain to synthesize carbamoyl phosphate. Tetramer of heterodimers (alpha,beta)4. Requires Mg(2+) as cofactor. It depends on Mn(2+) as a cofactor.

It catalyses the reaction hydrogencarbonate + L-glutamine + 2 ATP + H2O = carbamoyl phosphate + L-glutamate + 2 ADP + phosphate + 2 H(+). The enzyme catalyses hydrogencarbonate + NH4(+) + 2 ATP = carbamoyl phosphate + 2 ADP + phosphate + 2 H(+). The protein operates within amino-acid biosynthesis; L-arginine biosynthesis; carbamoyl phosphate from bicarbonate: step 1/1. Its pathway is pyrimidine metabolism; UMP biosynthesis via de novo pathway; (S)-dihydroorotate from bicarbonate: step 1/3. Large subunit of the glutamine-dependent carbamoyl phosphate synthetase (CPSase). CPSase catalyzes the formation of carbamoyl phosphate from the ammonia moiety of glutamine, carbonate, and phosphate donated by ATP, constituting the first step of 2 biosynthetic pathways, one leading to arginine and/or urea and the other to pyrimidine nucleotides. The large subunit (synthetase) binds the substrates ammonia (free or transferred from glutamine from the small subunit), hydrogencarbonate and ATP and carries out an ATP-coupled ligase reaction, activating hydrogencarbonate by forming carboxy phosphate which reacts with ammonia to form carbamoyl phosphate. The sequence is that of Carbamoyl phosphate synthase large chain from Archaeoglobus fulgidus (strain ATCC 49558 / DSM 4304 / JCM 9628 / NBRC 100126 / VC-16).